A 571-amino-acid polypeptide reads, in one-letter code: Glutamate--tRNA ligase (571 aa).

The 'HIGH' region signature appears at 38–48 (PSPTGFMHIGG). A 'KMSKS' region motif is present at residues 316–320 (KLSKR). An ATP-binding site is contributed by Lys-319.

This sequence belongs to the class-I aminoacyl-tRNA synthetase family. Glutamate--tRNA ligase type 1 subfamily. As to quaternary structure, monomer.

It is found in the cytoplasm. It carries out the reaction tRNA(Glu) + L-glutamate + ATP = L-glutamyl-tRNA(Glu) + AMP + diphosphate. Its function is as follows. Catalyzes the attachment of glutamate to tRNA(Glu) in a two-step reaction: glutamate is first activated by ATP to form Glu-AMP and then transferred to the acceptor end of tRNA(Glu). This chain is Glutamate--tRNA ligase, found in Sorangium cellulosum (strain So ce56) (Polyangium cellulosum (strain So ce56)).